The primary structure comprises 71 residues: Small ribosomal subunit protein bS21 (71 aa).

The protein belongs to the bacterial ribosomal protein bS21 family.

The protein is Small ribosomal subunit protein bS21 of Blochmanniella pennsylvanica (strain BPEN).